The chain runs to 2098 residues: Unconventional myosin heavy chain 6 (2098 aa).

Residues 62 to 732 (QGVEDMCQLG…HDLVLEQEYY (671 aa)) form the Myosin motor domain. 155–162 (GESGAGKT) contributes to the ATP binding site. 2 actin-binding regions span residues 609-631 (LEQL…KPNE) and 711-725 (QLGK…KHDL). IQ domains are found at residues 735-757 (LKDK…DFEK), 758-787 (QRQA…GFSR), and 804-833 (LRKT…RGEK). A disordered region spans residues 860-898 (FLPSDGKDSGNENDSADSSRRGSYSRLHTSPVMPPANIP). A MyTH4 1 domain is found at 929–1168 (HVKKPLKTAL…PSYVELQANK (240 aa)). A Ras-associating domain is found at 1171–1211 (KPVVLAVTFMDGSVKTLCADSATTAAELCKQLAEKVGLTNS). Positions 1173–1481 (VVLAVTFMDG…MFLEGLKKRS (309 aa)) constitute an FERM 1 domain. One can recognise an SH3 domain in the interval 1479-1547 (KRSRYLVAIK…RAENVYVLPT (69 aa)). One can recognise a MyTH4 2 domain in the interval 1624 to 1772 (FSREHIDQPL…PHLVEVEAIQ (149 aa)). An FERM 2 domain is found at 1778 to 2086 (IFHKVFFPDN…SYISLLISNQ (309 aa)).

Belongs to the TRAFAC class myosin-kinesin ATPase superfamily. Myosin family. Interacts with unc-98.

It is found in the cytoplasm. Myosins are actin-based motor molecules with ATPase activity. Unconventional myosins serve in intracellular movements. Their highly divergent tails are presumed to bind to membranous compartments, which would be moved relative to actin filaments. This chain is Unconventional myosin heavy chain 6, found in Caenorhabditis elegans.